Consider the following 274-residue polypeptide: Nitrogenase iron protein (274 aa).

8–15 (GKGGIGKS) contributes to the ATP binding site. Cys94 contacts [4Fe-4S] cluster. The residue at position 97 (Arg97) is an ADP-ribosylarginine; by dinitrogenase reductase ADP-ribosyltransferase. Cys129 lines the [4Fe-4S] cluster pocket.

It belongs to the NifH/BchL/ChlL family. Homodimer. The cofactor is [4Fe-4S] cluster. The reversible ADP-ribosylation of Arg-97 inactivates the nitrogenase reductase and regulates nitrogenase activity.

The catalysed reaction is N2 + 8 reduced [2Fe-2S]-[ferredoxin] + 16 ATP + 16 H2O = H2 + 8 oxidized [2Fe-2S]-[ferredoxin] + 2 NH4(+) + 16 ADP + 16 phosphate + 6 H(+). In terms of biological role, the key enzymatic reactions in nitrogen fixation are catalyzed by the nitrogenase complex, which has 2 components: the iron protein and the molybdenum-iron protein. This chain is Nitrogenase iron protein, found in Methanocella arvoryzae (strain DSM 22066 / NBRC 105507 / MRE50).